Consider the following 546-residue polypeptide: Glucose-6-phosphate isomerase (546 aa).

E357 (proton donor) is an active-site residue. Active-site residues include H389 and K509.

It belongs to the GPI family.

It is found in the cytoplasm. It carries out the reaction alpha-D-glucose 6-phosphate = beta-D-fructose 6-phosphate. It participates in carbohydrate biosynthesis; gluconeogenesis. It functions in the pathway carbohydrate degradation; glycolysis; D-glyceraldehyde 3-phosphate and glycerone phosphate from D-glucose: step 2/4. Its function is as follows. Catalyzes the reversible isomerization of glucose-6-phosphate to fructose-6-phosphate. The polypeptide is Glucose-6-phosphate isomerase (Anaeromyxobacter sp. (strain K)).